A 155-amino-acid polypeptide reads, in one-letter code: Small ribosomal subunit protein uS7cz/uS7cy (155 aa).

It belongs to the universal ribosomal protein uS7 family. Part of the 30S ribosomal subunit.

The protein localises to the plastid. It localises to the chloroplast. One of the primary rRNA binding proteins, it binds directly to 16S rRNA where it nucleates assembly of the head domain of the 30S subunit. The chain is Small ribosomal subunit protein uS7cz/uS7cy (rps7-A) from Piper cenocladum (Ant piper).